The primary structure comprises 87 residues: uncharacterized protein (87 aa).

The chain crosses the membrane as a helical span at residues 13-33; that stretch reads LMIVSAVFGGIGIITTIVFVI. Positions 66–87 are disordered; sequence EECGGSTETSSSKPKKKAKKEV. The span at 78–87 shows a compositional bias: basic residues; that stretch reads KPKKKAKKEV.

Its subcellular location is the membrane. This is an uncharacterized protein from Caenorhabditis elegans.